The chain runs to 179 residues: Large ribosomal subunit protein uL6 (179 aa).

The protein belongs to the universal ribosomal protein uL6 family. As to quaternary structure, part of the 50S ribosomal subunit.

This protein binds to the 23S rRNA, and is important in its secondary structure. It is located near the subunit interface in the base of the L7/L12 stalk, and near the tRNA binding site of the peptidyltransferase center. In Syntrophobacter fumaroxidans (strain DSM 10017 / MPOB), this protein is Large ribosomal subunit protein uL6.